Reading from the N-terminus, the 424-residue chain is Serine--tRNA ligase (424 aa).

Residue 231–233 (TAE) participates in L-serine binding. 262 to 264 (RSE) contacts ATP. Residue Glu285 coordinates L-serine. Residue 349–352 (EISS) coordinates ATP. Ser385 provides a ligand contact to L-serine.

It belongs to the class-II aminoacyl-tRNA synthetase family. Type-1 seryl-tRNA synthetase subfamily. As to quaternary structure, homodimer. The tRNA molecule binds across the dimer.

It localises to the cytoplasm. The enzyme catalyses tRNA(Ser) + L-serine + ATP = L-seryl-tRNA(Ser) + AMP + diphosphate + H(+). It carries out the reaction tRNA(Sec) + L-serine + ATP = L-seryl-tRNA(Sec) + AMP + diphosphate + H(+). It participates in aminoacyl-tRNA biosynthesis; selenocysteinyl-tRNA(Sec) biosynthesis; L-seryl-tRNA(Sec) from L-serine and tRNA(Sec): step 1/1. In terms of biological role, catalyzes the attachment of serine to tRNA(Ser). Is also able to aminoacylate tRNA(Sec) with serine, to form the misacylated tRNA L-seryl-tRNA(Sec), which will be further converted into selenocysteinyl-tRNA(Sec). The sequence is that of Serine--tRNA ligase from Bacillus cereus (strain ZK / E33L).